A 349-amino-acid polypeptide reads, in one-letter code: tRNA pseudouridine synthase D (349 aa).

F27 serves as a coordination point for substrate. The active-site Nucleophile is D80. N129 is a substrate binding site. Positions G155–L303 constitute a TRUD domain. A substrate-binding site is contributed by F329.

The protein belongs to the pseudouridine synthase TruD family.

The enzyme catalyses uridine(13) in tRNA = pseudouridine(13) in tRNA. In terms of biological role, responsible for synthesis of pseudouridine from uracil-13 in transfer RNAs. The polypeptide is tRNA pseudouridine synthase D (Salmonella newport (strain SL254)).